Reading from the N-terminus, the 372-residue chain is Methylthioribose-1-phosphate isomerase (372 aa).

Asp-252 serves as the catalytic Proton donor.

Belongs to the eIF-2B alpha/beta/delta subunits family. MtnA subfamily.

Its subcellular location is the cytoplasm. The protein localises to the nucleus. The catalysed reaction is 5-(methylsulfanyl)-alpha-D-ribose 1-phosphate = 5-(methylsulfanyl)-D-ribulose 1-phosphate. Its pathway is amino-acid biosynthesis; L-methionine biosynthesis via salvage pathway; L-methionine from S-methyl-5-thio-alpha-D-ribose 1-phosphate: step 1/6. Catalyzes the interconversion of methylthioribose-1-phosphate (MTR-1-P) into methylthioribulose-1-phosphate (MTRu-1-P). In Yarrowia lipolytica (strain CLIB 122 / E 150) (Yeast), this protein is Methylthioribose-1-phosphate isomerase.